Here is a 1189-residue protein sequence, read N- to C-terminus: Pumilio homolog 1 (1189 aa).

Position 2 is an N-acetylserine (Ser-2). Phosphoserine is present on Ser-19. The disordered stretch occupies residues 22-73 (LKHHPQEPANPNMPVVLTSGTGSQAQPQPAANQALAAGTHSSPVPGSIGVAG). Positions 45-58 (QAQPQPAANQALAA) are enriched in low complexity. Phosphoserine occurs at positions 75, 98, and 106. At Thr-112 the chain carries Phosphothreonine. Ser-124, Ser-159, Ser-197, Ser-209, and Ser-229 each carry phosphoserine. Residues 233 to 272 (SCLRKGGFGPRDADSDENDKGEKKNKGTFDGDKLGDLKEE) form a disordered region. Basic and acidic residues predominate over residues 250-272 (NDKGEKKNKGTFDGDKLGDLKEE). At Ser-305 the chain carries Phosphoserine. The segment covering 491-503 (QQSAPQAQQGQQQ) has biased composition (low complexity). Disordered stretches follow at residues 491–525 (QQSA…GQQT) and 614–647 (AGTT…SSFY). Over residues 512–525 (RPLTPNQNQQGQQT) the composition is skewed to polar residues. Thr-515 carries the phosphothreonine modification. Residues 627–647 (QQPQPQPQQQPSNNLASSSFY) show a composition bias toward low complexity. Phosphoserine occurs at positions 710 and 715. Residues 743–773 (GPVGMPLPSQGPGHSQTPPPSLSSHGSSSSL) form a disordered region. Low complexity predominate over residues 764–773 (LSSHGSSSSL). Arg-797 is modified (omega-N-methylarginine). Ser-807 and Ser-823 each carry phosphoserine. In terms of domain architecture, PUM-HD spans 829–1171 (GRSRLLEDFR…HILAKLEKYY (343 aa)). Pumilio repeat units lie at residues 849–884 (EIAG…LVFN), 885–920 (EILQ…ALAE), 921–958 (RIRG…EMVR), 959–994 (ELDG…FIID), 995–1030 (AFKG…PILE), 1031–1066 (ELHQ…KIVA), 1067–1102 (EIRG…VLID), and 1106–1145 (TMND…IVMH). The segment at 864–868 (SRFIQ) is adenine-nucleotide binding in RNA target. The segment at 900-904 (NYVIQ) is uracil-nucleotide binding in RNA target. Positions 936–940 (CRVIQ) are adenine-nucleotide binding in RNA target. Positions 974–978 (NHVVQ) are non-specific-nucleotide binding in RNA target. An adenine-nucleotide binding in RNA target region spans residues 1010-1014 (CRVIQ). The uracil-nucleotide binding in RNA target stretch occupies residues 1046-1050 (NYVIQ). Guanine-nucleotide binding in RNA target stretches follow at residues 1082–1086 (SNVVE) and 1083–1086 (NVVE). The uracil-nucleotide binding in RNA target stretch occupies residues 1125-1129 (NYVVQ).

Recruits the CCR4-POP2-NOT deadenylase leading to translational inhibition and mRNA degradation. Interacts with TRIM71 (via NHL repeats) in an RNA-dependent manner. Post-translationally, phosphorylation at Ser-715 promotes RNA-binding activity. Following growth factor stimulation phosphorylated at Ser-715, promoting binding to the 3'-UTR of CDKN1B/p27 mRNA. As to expression, widely expressed. Expressed in brain, heart, kidney, liver, lung, skin, intestine, spleen, testis and thymus. Weakly or not expressed in muscles and stomach. Expressed at various stages of myeloid and lymphoid cell development. Highly expressed in testis. Expressed in all major brain regions (at protein level).

The protein localises to the cytoplasm. Its subcellular location is the P-body. The protein resides in the cytoplasmic granule. Functionally, sequence-specific RNA-binding protein that acts as a post-transcriptional repressor by binding the 3'-UTR of mRNA targets. Binds to an RNA consensus sequence, the Pumilio Response Element (PRE), 5'-UGUANAUA-3', that is related to the Nanos Response Element (NRE). Mediates post-transcriptional repression of transcripts via different mechanisms: acts via direct recruitment of the CCR4-POP2-NOT deadenylase leading to translational inhibition and mRNA degradation. Also mediates deadenylation-independent repression by promoting accessibility of miRNAs. Following growth factor stimulation, phosphorylated and binds to the 3'-UTR of CDKN1B/p27 mRNA, inducing a local conformational change that exposes miRNA-binding sites, promoting association of miR-221 and miR-222, efficient suppression of CDKN1B/p27 expression, and rapid entry to the cell cycle. Acts as a post-transcriptional repressor of E2F3 mRNAs by binding to its 3'-UTR and facilitating miRNA regulation. Represses a program of genes necessary to maintain genomic stability such as key mitotic, DNA repair and DNA replication factors. Its ability to repress those target mRNAs is regulated by the lncRNA NORAD (non-coding RNA activated by DNA damage) which, due to its high abundance and multitude of PUMILIO binding sites, is able to sequester a significant fraction of PUM1 and PUM2 in the cytoplasm. Involved in neuronal functions by regulating ATXN1 mRNA levels: acts by binding to the 3'-UTR of ATXN1 transcripts, leading to their down-regulation independently of the miRNA machinery. In testis, acts as a post-transcriptional regulator of spermatogenesis by binding to the 3'-UTR of mRNAs coding for regulators of p53/TP53. Involved in embryonic stem cell renewal by facilitating the exit from the ground state: acts by targeting mRNAs coding for naive pluripotency transcription factors and accelerates their down-regulation at the onset of differentiation. Binds specifically to miRNA MIR199A precursor, with PUM2, regulates miRNA MIR199A expression at a postranscriptional level. The chain is Pumilio homolog 1 from Mus musculus (Mouse).